The following is a 379-amino-acid chain: S-(hydroxymethyl)glutathione dehydrogenase (379 aa).

Residue C47 coordinates Zn(2+). H48 contributes to the NAD(+) binding site. Zn(2+) contacts are provided by H69, E70, C99, C102, C105, C113, and C176. Residues 201-206 (GAGCIG), D225, and 296-298 (IGV) each bind NAD(+).

This sequence belongs to the zinc-containing alcohol dehydrogenase family. Class-III subfamily. Zn(2+) serves as cofactor.

It carries out the reaction a primary alcohol + NAD(+) = an aldehyde + NADH + H(+). The catalysed reaction is a secondary alcohol + NAD(+) = a ketone + NADH + H(+). It catalyses the reaction S-(hydroxymethyl)glutathione + NADP(+) = S-formylglutathione + NADPH + H(+). The enzyme catalyses S-(hydroxymethyl)glutathione + NAD(+) = S-formylglutathione + NADH + H(+). It carries out the reaction S-nitrosoglutathione + NADH + H(+) = S-(hydroxysulfenamide)glutathione + NAD(+). Oxidizes long-chain alcohols and, in the presence of glutathione, is able to oxidize formaldehyde. Also acts as a S-nitroso-glutathione reductase by catalyzing the NADH-dependent reduction of S-nitrosoglutathione, thereby regulating protein S-nitrosylation. The sequence is that of S-(hydroxymethyl)glutathione dehydrogenase (FLD1) from Komagataella pastoris (Yeast).